The chain runs to 550 residues: Methionine--tRNA ligase (550 aa).

Positions 14 to 24 (PYANGSLHIGH) match the 'HIGH' region motif. C145, C148, C158, and C161 together coordinate Zn(2+). The 'KMSKS' region signature appears at 331–335 (KMSKS). Residue K334 participates in ATP binding.

It belongs to the class-I aminoacyl-tRNA synthetase family. MetG type 1 subfamily. As to quaternary structure, monomer. Zn(2+) is required as a cofactor.

The protein resides in the cytoplasm. It catalyses the reaction tRNA(Met) + L-methionine + ATP = L-methionyl-tRNA(Met) + AMP + diphosphate. Is required not only for elongation of protein synthesis but also for the initiation of all mRNA translation through initiator tRNA(fMet) aminoacylation. The chain is Methionine--tRNA ligase from Wigglesworthia glossinidia brevipalpis.